Here is an 87-residue protein sequence, read N- to C-terminus: Protein Isd11 (87 aa).

This sequence belongs to the complex I LYR family. In terms of assembly, interacts with IscS; the interaction enhances cysteine desulfurase activity of IscS. Component of a complex, at least composed of IscS, Isd11 and IscU.

Its subcellular location is the mitochondrion. Its pathway is cofactor biosynthesis; iron-sulfur cluster biosynthesis. In terms of biological role, participates in iron-sulfur cluster formation (ISC) pathway for iron-sulfur (Fe-S) cluster biogenesis. Enhances cysteine desulfurase activity of IscS. The polypeptide is Protein Isd11 (Plasmodium falciparum (isolate 3D7)).